A 150-amino-acid chain; its full sequence is Toxin coregulated pilus biosynthesis protein Q (150 aa).

Functionally, involved in TCP pilus biogenesis. In Vibrio cholerae serotype O1 (strain ATCC 39315 / El Tor Inaba N16961), this protein is Toxin coregulated pilus biosynthesis protein Q (tcpQ).